A 493-amino-acid polypeptide reads, in one-letter code: Cytochrome P450 710A3 (493 aa).

A helical transmembrane segment spans residues 5–25; the sequence is VSLFASLTPYLVSALLLFLLL. Residue cysteine 435 participates in heme binding.

Belongs to the cytochrome P450 family. Heme is required as a cofactor. In terms of tissue distribution, expressed in stems. Detected in primary root caps and immature petals.

It is found in the membrane. It carries out the reaction 5-dehydroepisterol + NADPH + O2 + H(+) = ergosta-5,7,22,24(28)-tetraen-3beta-ol + NADP(+) + 2 H2O. Functionally, required to form the C-22 double bond in the sterol side chain. Possesses in vitro C-22 desaturase activity toward beta-sitosterol and produces stigmasterol. This chain is Cytochrome P450 710A3, found in Arabidopsis thaliana (Mouse-ear cress).